The following is a 422-amino-acid chain: NADP-dependent malic enzyme (422 aa).

The active-site Proton donor is Tyr-39. Residue Lys-94 is the Proton acceptor of the active site. Lys-94 is a substrate binding site. Residues Glu-136, Asp-137, and Asp-162 each contribute to the a divalent metal cation site. NADP(+) is bound by residues 195–198 (AGAA), Asn-286, and Asn-318. Asn-318 contacts substrate.

The protein belongs to the malic enzymes family. The cofactor is Mg(2+). It depends on Mn(2+) as a cofactor.

The enzyme catalyses (S)-malate + NADP(+) = pyruvate + CO2 + NADPH. The catalysed reaction is oxaloacetate + H(+) = pyruvate + CO2. This chain is NADP-dependent malic enzyme, found in Halomonas elongata (strain ATCC 33173 / DSM 2581 / NBRC 15536 / NCIMB 2198 / 1H9).